Here is a 91-residue protein sequence, read N- to C-terminus: Probable Fe(2+)-trafficking protein (91 aa).

This sequence belongs to the Fe(2+)-trafficking protein family. As to quaternary structure, monomer.

Functionally, could be a mediator in iron transactions between iron acquisition and iron-requiring processes, such as synthesis and/or repair of Fe-S clusters in biosynthetic enzymes. The polypeptide is Probable Fe(2+)-trafficking protein (Klebsiella pneumoniae (strain 342)).